The sequence spans 148 residues: Putative nickel-responsive regulator (148 aa).

Ni(2+) is bound by residues His76, His87, His89, and Cys95.

This sequence belongs to the transcriptional regulatory CopG/NikR family. It depends on Ni(2+) as a cofactor.

Its function is as follows. Transcriptional regulator. The protein is Putative nickel-responsive regulator of Rhodopseudomonas palustris (strain ATCC BAA-98 / CGA009).